The following is a 330-amino-acid chain: 5'-AMP-activated protein kinase subunit gamma-1 (330 aa).

The segment covering 1-12 has biased composition (low complexity); the sequence is MESVAAESAPAP. The tract at residues 1–25 is disordered; it reads MESVAAESAPAPENEHSQETPESNS. CBS domains are found at residues 42 to 102, 124 to 186, and 197 to 259; these read PTSS…KSAL, SFKP…PKPE, and IGTY…NLDV. ADP is bound by residues Arg69, 84–89, Val129, 150–151, and Lys169; these read MLTITD and HR. Residues Arg69, 84–89, Val129, His150, 150–151, Lys169, Thr199, Ala204, 225–226, and 241–244 each bind AMP; these read MLTITD, HR, SA, and SKFD. ATP contacts are provided by residues Arg69, 84–89, Val129, 150–151, Arg151, and Lys169; these read MLTITD and HR. An AMPK pseudosubstrate motif is present at residues 137–158; it reads LFDAVSSLIRNKIHRLPVIDPE. 241–244 provides a ligand contact to ADP; it reads SKFD. 241 to 244 contributes to the ATP binding site; sequence SKFD. Ser260 carries the post-translational modification Phosphoserine; by ULK1. Residue Thr262 is modified to Phosphothreonine; by ULK1. Arg268 is an ADP binding site. Arg268 serves as a coordination point for AMP. Arg268 contributes to the ATP binding site. At Ser269 the chain carries Phosphoserine; by ULK1. Positions 271–328 constitute a CBS 4 domain; sequence YFEGVLKCYLHETLEAIINRLVEAEVHRLVVVDEHDVVKGIVSLSDILQALVLTGGEK. ADP is bound by residues Leu276 and 297-298; that span reads HR. Residues Leu276, His297, 297–298, and 313–316 contribute to the AMP site; these read HR and SLSD. ATP-binding positions include Leu276 and 297 to 298; that span reads HR.

It belongs to the 5'-AMP-activated protein kinase gamma subunit family. In terms of assembly, AMPK is a heterotrimer of an alpha catalytic subunit (PRKAA1 or PRKAA2), a beta (PRKAB1 or PRKAB2) and a gamma non-catalytic subunits (PRKAG1, PRKAG2 or PRKAG3). Interacts with FNIP1 and FNIP2. Phosphorylated by ULK1 and ULK2; leading to negatively regulate AMPK activity and suggesting the existence of a regulatory feedback loop between ULK1, ULK2 and AMPK. There is some ambiguity for a phosphosite: Ser-260/Thr-262. In terms of processing, glycosylated; O-GlcNAcylated by OGT, promoting the AMP-activated protein kinase (AMPK) activity. In terms of tissue distribution, highly expressed in heart and brain, also found in kidney, white adipose tissue, lung and spleen.

AMP/ATP-binding subunit of AMP-activated protein kinase (AMPK), an energy sensor protein kinase that plays a key role in regulating cellular energy metabolism. In response to reduction of intracellular ATP levels, AMPK activates energy-producing pathways and inhibits energy-consuming processes: inhibits protein, carbohydrate and lipid biosynthesis, as well as cell growth and proliferation. AMPK acts via direct phosphorylation of metabolic enzymes, and by longer-term effects via phosphorylation of transcription regulators. Also acts as a regulator of cellular polarity by remodeling the actin cytoskeleton; probably by indirectly activating myosin. Gamma non-catalytic subunit mediates binding to AMP, ADP and ATP, leading to activate or inhibit AMPK: AMP-binding results in allosteric activation of alpha catalytic subunit (PRKAA1 or PRKAA2) both by inducing phosphorylation and preventing dephosphorylation of catalytic subunits. ADP also stimulates phosphorylation, without stimulating already phosphorylated catalytic subunit. ATP promotes dephosphorylation of catalytic subunit, rendering the AMPK enzyme inactive. The chain is 5'-AMP-activated protein kinase subunit gamma-1 (Prkag1) from Rattus norvegicus (Rat).